The following is a 243-amino-acid chain: DNA repair protein RecO (243 aa).

Belongs to the RecO family.

Functionally, involved in DNA repair and RecF pathway recombination. The chain is DNA repair protein RecO from Geobacter sulfurreducens (strain ATCC 51573 / DSM 12127 / PCA).